We begin with the raw amino-acid sequence, 205 residues long: Holliday junction resolvase RecU (205 aa).

The disordered stretch occupies residues 1–26 (MIRYPNGKSYQPIQPIGTKKRISGES). Mg(2+) is bound by residues T86, D88, E101, and Q120.

It belongs to the RecU family. Mg(2+) is required as a cofactor.

It localises to the cytoplasm. The catalysed reaction is Endonucleolytic cleavage at a junction such as a reciprocal single-stranded crossover between two homologous DNA duplexes (Holliday junction).. In terms of biological role, endonuclease that resolves Holliday junction intermediates in genetic recombination. Cleaves mobile four-strand junctions by introducing symmetrical nicks in paired strands. Promotes annealing of linear ssDNA with homologous dsDNA. Required for DNA repair, homologous recombination and chromosome segregation. The protein is Holliday junction resolvase RecU of Bacillus pumilus (strain SAFR-032).